The sequence spans 308 residues: D-alanine--D-alanine ligase (308 aa).

The ATP-grasp domain occupies 102-302 (KHVAKAAGIP…FGEFLRWMVE (201 aa)). Residue 128-183 (PMKPPYVVKPVREGSSFGVVIVKEDQSHPPQVITSSEWRYGDRVMVERYIAGREFT) coordinates ATP. Residues D252, E269, and N271 each contribute to the Mg(2+) site.

It belongs to the D-alanine--D-alanine ligase family. Mg(2+) serves as cofactor. It depends on Mn(2+) as a cofactor.

Its subcellular location is the cytoplasm. It carries out the reaction 2 D-alanine + ATP = D-alanyl-D-alanine + ADP + phosphate + H(+). Its pathway is cell wall biogenesis; peptidoglycan biosynthesis. Cell wall formation. The protein is D-alanine--D-alanine ligase of Rhizobium meliloti (strain 1021) (Ensifer meliloti).